The chain runs to 307 residues: Transcription initiation factor IIB 2 (307 aa).

Residues 7 to 38 form a TFIIB-type zinc finger; it reads TPKRCPECNSEHLIRDYEHGELICADCGAVIE. 4 residues coordinate Zn(2+): Cys-11, Cys-14, Cys-30, and Cys-33. A run of 2 repeats spans residues 124–207 and 218–299.

The protein belongs to the TFIIB family.

Stabilizes TBP binding to an archaeal box-A promoter. Also responsible for recruiting RNA polymerase II to the pre-initiation complex (DNA-TBP-TFIIB). In Thermoplasma acidophilum (strain ATCC 25905 / DSM 1728 / JCM 9062 / NBRC 15155 / AMRC-C165), this protein is Transcription initiation factor IIB 2.